The chain runs to 452 residues: Ribosomal protein uS12 methylthiotransferase RimO (452 aa).

Residues 5 to 116 (PTIAFSHLGC…IVDVLQRTES (112 aa)) enclose the MTTase N-terminal domain. [4Fe-4S] cluster contacts are provided by cysteine 14, cysteine 50, cysteine 79, cysteine 154, cysteine 158, and cysteine 161. The region spanning 140–369 (TTTSAVAYLR…MATQQPIAER (230 aa)) is the Radical SAM core domain. One can recognise a TRAM domain in the interval 372 to 438 (RAQIGRLVDV…IYDLHGEVAS (67 aa)).

The protein belongs to the methylthiotransferase family. RimO subfamily. Requires [4Fe-4S] cluster as cofactor.

It is found in the cytoplasm. It catalyses the reaction L-aspartate(89)-[ribosomal protein uS12]-hydrogen + (sulfur carrier)-SH + AH2 + 2 S-adenosyl-L-methionine = 3-methylsulfanyl-L-aspartate(89)-[ribosomal protein uS12]-hydrogen + (sulfur carrier)-H + 5'-deoxyadenosine + L-methionine + A + S-adenosyl-L-homocysteine + 2 H(+). Catalyzes the methylthiolation of an aspartic acid residue of ribosomal protein uS12. In Synechococcus sp. (strain ATCC 27144 / PCC 6301 / SAUG 1402/1) (Anacystis nidulans), this protein is Ribosomal protein uS12 methylthiotransferase RimO.